A 502-amino-acid chain; its full sequence is Phenylalanine--tRNA ligase alpha subunit (502 aa).

L-phenylalanine is bound by residues Thr339, 382 to 384 (QIE), and Tyr422. Glu424 contributes to the Mg(2+) binding site. Phe448 contacts L-phenylalanine.

Belongs to the class-II aminoacyl-tRNA synthetase family. Phe-tRNA synthetase alpha subunit type 2 subfamily. As to quaternary structure, tetramer of two alpha and two beta subunits. The cofactor is Mg(2+).

Its subcellular location is the cytoplasm. It catalyses the reaction tRNA(Phe) + L-phenylalanine + ATP = L-phenylalanyl-tRNA(Phe) + AMP + diphosphate + H(+). In Halobacterium salinarum (strain ATCC 29341 / DSM 671 / R1), this protein is Phenylalanine--tRNA ligase alpha subunit.